Consider the following 430-residue polypeptide: Tektin-2 (430 aa).

2 coiled-coil regions span residues 82–160 (LTDL…QAFE) and 273–379 (EKVY…DIAC).

This sequence belongs to the tektin family. In terms of assembly, microtubule inner protein component of sperm flagellar doublet microtubules. May interact with CCDC172. Post-translationally, tyrosine phosphorylated. In terms of processing, ubiquitinated, leading to its degradation. Deubiquitinated by USP16, promoting its stability.

The protein localises to the cytoplasm. It is found in the cytoskeleton. Its subcellular location is the cilium axoneme. The protein resides in the flagellum axoneme. It localises to the microtubule organizing center. Functionally, microtubule inner protein (MIP) part of the dynein-decorated doublet microtubules (DMTs) in cilia and flagellar axoneme. Plays a key role in the assembly or attachment of the inner dynein arm to microtubules in sperm flagella and tracheal cilia. Forms filamentous polymers in the walls of ciliary and flagellar microtubules. The polypeptide is Tektin-2 (TEKT2) (Macaca fascicularis (Crab-eating macaque)).